Here is a 555-residue protein sequence, read N- to C-terminus: Splicing factor U2af large subunit A (555 aa).

A disordered region spans residues 1-165 (MRDYEGNGVD…ISGFDMAPPT (165 aa)). 2 stretches are compositionally biased toward basic and acidic residues: residues 23 to 81 (ISRD…EKDR) and 90 to 127 (RDRSDRRERERTRDRDEDDLHRSRDYDRRRDNDKDRED). Over residues 143 to 155 (SKSRSRSPSKSKR) the composition is skewed to basic residues. RRM domains are found at residues 221–304 (RRVY…RPSD), 341–419 (DRIF…RANQ), and 460–546 (EVVT…YPEN).

Belongs to the splicing factor SR family. As to expression, expressed in stems, leaves and apical buds.

Its subcellular location is the nucleus. Necessary for the splicing of pre-mRNA. Binds to the U -enriched regions of plant introns. The chain is Splicing factor U2af large subunit A (U2AF65A) from Nicotiana plumbaginifolia (Leadwort-leaved tobacco).